Consider the following 625-residue polypeptide: MARKSHMYNAIPAGFESDEENMENLMSNLKIKRLEDITTGAGIDGCNFDATLDAKAEEFFKLFREKWNMYSKKKSPHLRQEFGRALMGHQDPLLLALKIFANCPDSSNIKTKSLSHFVLDTVCKLHKDFPHLGEGCDPNTSMIAFNFVKTSGLLALNNAVIHAYSLRQIRDLLLPKLRELLDNGLYKEVTQWSISLQLTHEFDMLELAFPLIAIEKLPLAEEYLDHATQQRLPFVKFLDSLLHKEKSVLELCEHLLDRYKNLKISHNVLSYRPMAKIVARLAKKYGFDDAVTPNYKFTKTCSYLHYLYREYEKTRMNLASFREVVSVHAFNHELRTDFVKYLASAGAHSEAIYWYTEFNIDPKDCPLEIETQVSQNGAGKASGWESPGKERCPSSRCDMYLTMDLPDECLIIVNKADEFDRMLYHLQQECVIYLDSEWMQSVCGDNQLCVLQIATGHNVYLIDCLARESLRSEHWRLLGANIFNNVNIRKVGFSMVSDLSVLQRSLPLQLRLQMPHHYLDLRNLWLELKKQRFGVELPFGNVNRAGDALTDLSLACLGKKLNKSNQCSNWANRPLRREQILYAAIDARCLMLIYNTLIERVSFIQAVIEKSIASNNFLRRGAHVK.

Serine 17 carries the phosphoserine modification. Residues 410–602 (LIIVNKADEF…IYNTLIERVS (193 aa)) form the 3'-5' exonuclease domain.

The protein belongs to the mut-7 family. Interacts with AGO1; the interaction is not RNA dependent. Mg(2+) serves as cofactor.

Possesses 3'-5' exoribonuclease activity. Required for 3'-end trimming of AGO1-bound miRNAs, in particular multiple-isoform miRNAs, which represents a critical step in miRNA maturation. The sequence is that of Exonuclease mut-7 homolog (Nbr) from Drosophila melanogaster (Fruit fly).